The primary structure comprises 173 residues: NADH-ubiquinone oxidoreductase chain 6 (173 aa).

A run of 5 helical transmembrane segments spans residues 1–21, 27–47, 53–73, 86–106, and 139–159; these read MTYI…AVAS, FAAL…VGYG, LVLF…SAAL, SVLG…GWFW, and YGGG…FVVL.

Belongs to the complex I subunit 6 family.

The protein localises to the mitochondrion membrane. The catalysed reaction is a ubiquinone + NADH + 5 H(+)(in) = a ubiquinol + NAD(+) + 4 H(+)(out). In terms of biological role, core subunit of the mitochondrial membrane respiratory chain NADH dehydrogenase (Complex I) that is believed to belong to the minimal assembly required for catalysis. Complex I functions in the transfer of electrons from NADH to the respiratory chain. The immediate electron acceptor for the enzyme is believed to be ubiquinone. The protein is NADH-ubiquinone oxidoreductase chain 6 (MT-ND6) of Salmo salar (Atlantic salmon).